We begin with the raw amino-acid sequence, 182 residues long: Ribosome maturation factor RimM (182 aa).

Residues 103 to 182 form the PRC barrel domain; the sequence is DGSYYWKDLM…TIEVDWDPGF (80 aa).

The protein belongs to the RimM family. As to quaternary structure, binds ribosomal protein uS19.

The protein resides in the cytoplasm. An accessory protein needed during the final step in the assembly of 30S ribosomal subunit, possibly for assembly of the head region. Essential for efficient processing of 16S rRNA. May be needed both before and after RbfA during the maturation of 16S rRNA. It has affinity for free ribosomal 30S subunits but not for 70S ribosomes. The chain is Ribosome maturation factor RimM from Citrobacter koseri (strain ATCC BAA-895 / CDC 4225-83 / SGSC4696).